A 317-amino-acid chain; its full sequence is Nitrilase (317 aa).

A CN hydrolase domain is found at 5–280; sequence VKVAVVQAEP…DGVIISELDM (276 aa). The active-site Proton acceptor is glutamate 45. Lysine 125 is an active-site residue. The active-site Nucleophile is cysteine 165.

Belongs to the carbon-nitrogen hydrolase superfamily. Nitrilase family.

The catalysed reaction is a nitrile + 2 H2O = a carboxylate + NH4(+). Nitrilase that hydrolyzes preferentially 4-cyanopyridine. Is also able to hydrolyze some aliphatic nitriles, such as phenylacetonitrile. This chain is Nitrilase, found in Meyerozyma guilliermondii (strain ATCC 6260 / CBS 566 / DSM 6381 / JCM 1539 / NBRC 10279 / NRRL Y-324) (Yeast).